The chain runs to 66 residues: Small ribosomal subunit protein bS21 (66 aa).

Residues 47-66 are disordered; sequence KAQEAARRKRKFARKRMYED. Residues 53–66 are compositionally biased toward basic residues; sequence RRKRKFARKRMYED.

Belongs to the bacterial ribosomal protein bS21 family.

The chain is Small ribosomal subunit protein bS21 from Rickettsia bellii (strain RML369-C).